We begin with the raw amino-acid sequence, 482 residues long: tRNA sulfurtransferase (482 aa).

The region spanning 61–165 (LAIRDALTRI…DDRLLLIKGR (105 aa)) is the THUMP domain. Residues 183–184 (LI), Lys-265, Gly-287, and Gln-296 contribute to the ATP site. Cys-344 and Cys-456 are disulfide-bonded. The Rhodanese domain maps to 404–482 (FGPNDVILDI…GFQNVKVYRP (79 aa)). Catalysis depends on Cys-456, which acts as the Cysteine persulfide intermediate.

Belongs to the ThiI family.

The protein localises to the cytoplasm. It catalyses the reaction [ThiI sulfur-carrier protein]-S-sulfanyl-L-cysteine + a uridine in tRNA + 2 reduced [2Fe-2S]-[ferredoxin] + ATP + H(+) = [ThiI sulfur-carrier protein]-L-cysteine + a 4-thiouridine in tRNA + 2 oxidized [2Fe-2S]-[ferredoxin] + AMP + diphosphate. The enzyme catalyses [ThiS sulfur-carrier protein]-C-terminal Gly-Gly-AMP + S-sulfanyl-L-cysteinyl-[cysteine desulfurase] + AH2 = [ThiS sulfur-carrier protein]-C-terminal-Gly-aminoethanethioate + L-cysteinyl-[cysteine desulfurase] + A + AMP + 2 H(+). It participates in cofactor biosynthesis; thiamine diphosphate biosynthesis. Catalyzes the ATP-dependent transfer of a sulfur to tRNA to produce 4-thiouridine in position 8 of tRNAs, which functions as a near-UV photosensor. Also catalyzes the transfer of sulfur to the sulfur carrier protein ThiS, forming ThiS-thiocarboxylate. This is a step in the synthesis of thiazole, in the thiamine biosynthesis pathway. The sulfur is donated as persulfide by IscS. The protein is tRNA sulfurtransferase of Citrobacter koseri (strain ATCC BAA-895 / CDC 4225-83 / SGSC4696).